A 407-amino-acid chain; its full sequence is MTPTGPSHHSMAPKRVLPAASQSNMYGNIRSASTTSTTASTSSQALRLLQNAKTSKNADNRIAHAERQGPPSAHPAAMQKPAARVAPSNENRPDPAARQHQHQQQLQQQKATGHDRVLKESQAGNSTTTTMTSTQSKEANKWSLANFDIGRPLGKGKFGNVYLAREKKSKFIVALKVLFKSQLQKAKVEHQLRREIEIQSHLRHDHILRLYGYFYDDTRVYLILEYAARGELYKEMQAQKAGHFDEDRSAVYIYQLAKALLYCHEKKVIHRDIKPENLLLDLKGDLKIADFGWSVHAPSSRRATLCGTLDYLPPEMIEGKTHDEKVDLWSLGVLCYEFLVGKPPFESQGNTETYRKITKVEFTFPKHVSEGARDLICKLLKHNPSHRLSLEGVIAHAWIQEKISQRS.

2 disordered regions span residues 1–43 (MTPT…STSS) and 66–137 (ERQG…TQSK). Low complexity-rich tracts occupy residues 31-43 (SAST…STSS) and 126-136 (STTTTMTSTQS). The 253-residue stretch at 147-399 (FDIGRPLGKG…LEGVIAHAWI (253 aa)) folds into the Protein kinase domain. Residues lysine 157, lysine 176, and 224–227 (LEYA) contribute to the ATP site. Aspartate 272 functions as the Proton acceptor in the catalytic mechanism. ATP is bound at residue aspartate 290.

The protein belongs to the protein kinase superfamily. Ser/Thr protein kinase family.

The protein resides in the cytoplasm. It is found in the cytoskeleton. The protein localises to the spindle. It localises to the midbody. Its subcellular location is the microtubule organizing center. The protein resides in the centrosome. It is found in the nucleus. The protein localises to the chromosome. It localises to the centromere. It catalyses the reaction L-seryl-[protein] + ATP = O-phospho-L-seryl-[protein] + ADP + H(+). The catalysed reaction is L-threonyl-[protein] + ATP = O-phospho-L-threonyl-[protein] + ADP + H(+). Its activity is regulated as follows. Cdc2 activity is required for activation. Its function is as follows. Serine/threonine protein kinase that contributes to the regulation of cell cycle progression. Involved in meiotic apparatus formation and polar body extrusion. Contributes to Plk1 activation and phosphorylation of histone H3 at 'Ser-10' during meiosis I. Required for accurate progression of early embryonic M phase. Involved in chromosome alignment and cleavage furrow formation during early embryonic cycles. May be involved in mitotic spindle formation and cytokinesis. This chain is Aurora kinase, found in Patiria pectinifera (Starfish).